The following is a 166-amino-acid chain: Interferon gamma (166 aa).

The first 23 residues, 1 to 23, serve as a signal peptide directing secretion; that stretch reads MNYTSFILAFQLCAILGSSTYYC. Gln-24 bears the Pyrrolidone carboxylic acid mark. 2 N-linked (GlcNAc...) asparagine glycosylation sites follow: Asn-39 and Asn-106. Positions 147–166 are disordered; sequence ANLRKRKRSQNPFRGRRALQ. Residues 148 to 166 show a composition bias toward basic residues; it reads NLRKRKRSQNPFRGRRALQ.

The protein belongs to the type II (or gamma) interferon family. As to quaternary structure, homodimer. Interacts with IFNGR1 (via extracellular domain); this interaction promotes IFNGR1 dimerization. Released primarily from activated T lymphocytes.

It is found in the secreted. Functionally, type II interferon produced by immune cells such as T-cells and NK cells that plays crucial roles in antimicrobial, antiviral, and antitumor responses by activating effector immune cells and enhancing antigen presentation. Primarily signals through the JAK-STAT pathway after interaction with its receptor IFNGR1 to affect gene regulation. Upon IFNG binding, IFNGR1 intracellular domain opens out to allow association of downstream signaling components JAK2, JAK1 and STAT1, leading to STAT1 activation, nuclear translocation and transcription of IFNG-regulated genes. Many of the induced genes are transcription factors such as IRF1 that are able to further drive regulation of a next wave of transcription. Plays a role in class I antigen presentation pathway by inducing a replacement of catalytic proteasome subunits with immunoproteasome subunits. In turn, increases the quantity, quality, and repertoire of peptides for class I MHC loading. Increases the efficiency of peptide generation also by inducing the expression of activator PA28 that associates with the proteasome and alters its proteolytic cleavage preference. Up-regulates as well MHC II complexes on the cell surface by promoting expression of several key molecules such as cathepsins B/CTSB, H/CTSH, and L/CTSL. Participates in the regulation of hematopoietic stem cells during development and under homeostatic conditions by affecting their development, quiescence, and differentiation. In Equus caballus (Horse), this protein is Interferon gamma (IFNG).